Here is a 170-residue protein sequence, read N- to C-terminus: Protein FAM209 (170 aa).

Positions 1-20 (MRTLLRWCLFLSLCVSCACA) are cleaved as a signal peptide. Residues 56–76 (WLGNKWLWLFVAIMIYVMLKF) traverse the membrane as a helical segment. The segment at 83 to 107 (KEQHPPGLRGCQLRSPPKKAQNISP) is disordered.

Interacts with DPY19L2. Interacts with CYLC1; the interaction may be relevant for proper acrosome attachment to the nuclear envelope. As to expression, predominately expressed in testis.

It is found in the nucleus inner membrane. In terms of biological role, required for sperm acrosome biogenesis. The polypeptide is Protein FAM209 (Mus musculus (Mouse)).